The sequence spans 198 residues: RNA 2',3'-cyclic phosphodiesterase (198 aa).

The active-site Proton donor is the His-39. 2 short sequence motifs (HXTX) span residues 39–42 (HLTL) and 130–133 (HITL). Residue His-130 is the Proton acceptor of the active site.

It belongs to the 2H phosphoesterase superfamily. ThpR family.

The enzyme catalyses a 3'-end 2',3'-cyclophospho-ribonucleotide-RNA + H2O = a 3'-end 2'-phospho-ribonucleotide-RNA + H(+). Hydrolyzes RNA 2',3'-cyclic phosphodiester to an RNA 2'-phosphomonoester. This Thermus thermophilus (strain ATCC 27634 / DSM 579 / HB8) protein is RNA 2',3'-cyclic phosphodiesterase.